The chain runs to 235 residues: Pyridoxine 5'-phosphate synthase (235 aa).

Residue Asn6 participates in 3-amino-2-oxopropyl phosphate binding. 8 to 9 lines the 1-deoxy-D-xylulose 5-phosphate pocket; that stretch reads DH. A 3-amino-2-oxopropyl phosphate-binding site is contributed by Arg17. Catalysis depends on His42, which acts as the Proton acceptor. 1-deoxy-D-xylulose 5-phosphate contacts are provided by Arg44 and His49. Glu69 (proton acceptor) is an active-site residue. Thr99 serves as a coordination point for 1-deoxy-D-xylulose 5-phosphate. His189 serves as the catalytic Proton donor. 3-amino-2-oxopropyl phosphate is bound by residues Gly190 and 211 to 212; that span reads GH.

This sequence belongs to the PNP synthase family. Homooctamer; tetramer of dimers.

The protein resides in the cytoplasm. The enzyme catalyses 3-amino-2-oxopropyl phosphate + 1-deoxy-D-xylulose 5-phosphate = pyridoxine 5'-phosphate + phosphate + 2 H2O + H(+). It functions in the pathway cofactor biosynthesis; pyridoxine 5'-phosphate biosynthesis; pyridoxine 5'-phosphate from D-erythrose 4-phosphate: step 5/5. Functionally, catalyzes the complicated ring closure reaction between the two acyclic compounds 1-deoxy-D-xylulose-5-phosphate (DXP) and 3-amino-2-oxopropyl phosphate (1-amino-acetone-3-phosphate or AAP) to form pyridoxine 5'-phosphate (PNP) and inorganic phosphate. This is Pyridoxine 5'-phosphate synthase from Chlorobium chlorochromatii (strain CaD3).